The following is a 546-amino-acid chain: MAFWRNRHESPAISQERSPSPDRFQNSEDIREDNNNYNEDEKLGWFASFMGMFSLPYDWYLSINEDIAVIDWDSKSNSVAWPLGNVLTFLFFSVRLLQDNVIAPNINKLTHSDDAFDFSKSKNLQKYDYFQQYGGSASSSENLYYKMLRQLHRLFYLLTVLLLITNISVTYRYLFAHFQTYSIFYWKTVPKSKNVTKKSLHDLNHTYVEDAKRDSLWGMIKYLLFNGSHDDETNRAHYYELRKWTPSRFLTSFFVSFSPIAFCFLWMTDVTFKTLIPIIIHQYVLWFIVIDRYEQKLKDEQILSMSSVAELNSKVIQPKMNVLKQDAMVDATPYNDGIVYFYPAYTTTRSHVFATHTLSGKLSKEKYNPRTDSFEDANSQRTENYVRFSYHHPKSINGAYVRESYPSRQHSPRLSPSRYSHLQSGNTPSAPSTPLLIPSQQPHFDHSMLANASRNHNISERRNSHSPIKQHFANRLLNYPDETNDSIPDVSDDRFRMDDRFRRGRQGYFNRSPDINSGTLHYDDGDDDDNRISKSPFRNSSSSPFR.

Basic and acidic residues-rich tracts occupy residues 1–10 and 25–35; these read MAFWRNRHES and QNSEDIREDNN. The interval 1–35 is disordered; it reads MAFWRNRHESPAISQERSPSPDRFQNSEDIREDNN. The next 2 membrane-spanning stretches (helical) occupy residues 155–175 and 249–269; these read FYLLTVLLLITNISVTYRYLF and FLTSFFVSFSPIAFCFLWMTD. Disordered regions lie at residues 405-441 and 505-546; these read YPSRQHSPRLSPSRYSHLQSGNTPSAPSTPLLIPSQQ and RQGY…SPFR. The span at 406-441 shows a compositional bias: polar residues; the sequence is PSRQHSPRLSPSRYSHLQSGNTPSAPSTPLLIPSQQ. Residues 533-546 show a composition bias toward low complexity; the sequence is SKSPFRNSSSSPFR.

The protein belongs to the NUR1 family.

The protein resides in the nucleus membrane. Member of a perinuclear network that controls recombination at multiple loci to maintain genome stability. Required for rDNA repeat stability. In Kluyveromyces lactis (strain ATCC 8585 / CBS 2359 / DSM 70799 / NBRC 1267 / NRRL Y-1140 / WM37) (Yeast), this protein is Nuclear rim protein 1 (NUR1).